The primary structure comprises 120 residues: Ribonuclease P protein component (120 aa).

The protein belongs to the RnpA family. As to quaternary structure, consists of a catalytic RNA component (M1 or rnpB) and a protein subunit.

The catalysed reaction is Endonucleolytic cleavage of RNA, removing 5'-extranucleotides from tRNA precursor.. RNaseP catalyzes the removal of the 5'-leader sequence from pre-tRNA to produce the mature 5'-terminus. It can also cleave other RNA substrates such as 4.5S RNA. The protein component plays an auxiliary but essential role in vivo by binding to the 5'-leader sequence and broadening the substrate specificity of the ribozyme. The protein is Ribonuclease P protein component of Acidothermus cellulolyticus (strain ATCC 43068 / DSM 8971 / 11B).